Reading from the N-terminus, the 454-residue chain is Lamina-associated polypeptide 2, isoforms beta/gamma (454 aa).

The interval 1–410 is nucleoplasmic; it reads MPEFLEDPSV…KSEKTKKGRS (410 aa). The 44-residue stretch at 5-48 folds into the LEM-like domain; it reads LEDPSVLTKDKLKSELVANNVTLPAGEQRKDVYVQLYLQHLTAR. Disordered stretches follow at residues 47-117 and 149-265; these read ARNR…ELTN and LREQ…VETS. Residues 49 to 108 are linker; it reads NRPPLPAGTNSKGPPDFSSDEEREPTPVLGSGAAAAGRSRAAVGRKATKKTDKPRQEDKD. T57 carries the post-translational modification Phosphothreonine. Residues S59, S66, and S67 each carry the phosphoserine modification. The residue at position 74 (T74) is a Phosphothreonine. Positions 78-93 are enriched in low complexity; the sequence is GSGAAAAGRSRAAVGR. At S79 the chain carries Phosphoserine. Omega-N-methylarginine occurs at positions 86 and 88. The span at 97 to 106 shows a compositional bias: basic and acidic residues; that stretch reads KKTDKPRQED. The span at 107–117 shows a compositional bias: acidic residues; sequence KDDLDVTELTN. The region spanning 109 to 153 is the LEM domain; sequence DLDVTELTNEDLLDQLVKYGVNPGPIVGTTRKLYEKKLLKLREQG. The segment at 138-243 is NAKAP95-binding N; it reads TRKLYEKKLL…TSGSSKGGPL (106 aa). T154 carries the post-translational modification Phosphothreonine. The segment covering 155-178 has biased composition (polar residues); that stretch reads ESRSSTPLPTISSSAENTRQNGSN. 2 positions are modified to phosphoserine: S156 and S159. A phosphothreonine mark is found at T160 and T164. S166, S168, S177, S180, S184, and S190 each carry phosphoserine. Residues 179-203 are compositionally biased toward basic and acidic residues; the sequence is DSDRYSDNEEDSKIELKLEKREPLK. K207 carries the post-translational modification N6-acetyllysine. T211 is modified (phosphothreonine). The segment covering 220-237 has biased composition (polar residues); it reads NQSYSQAGITETEWTSGS. Phosphoserine occurs at positions 222, 224, 250, 254, 265, 292, and 306. A binds lamins B region spans residues 299 to 371; the sequence is TGNFKHASPI…SCRRPIKGAA (73 aa). Positions 300 to 374 are NAKAP95-binding C; that stretch reads GNFKHASPIL…RPIKGAAGRP (75 aa). A Phosphothreonine modification is found at T312. S315 bears the Phosphoserine mark. Position 320 is a citrulline (R320). Phosphoserine is present on residues S362, S378, and S385. K389 bears the N6-acetyllysine mark. Residue K401 forms a Glycyl lysine isopeptide (Lys-Gly) (interchain with G-Cter in SUMO2) linkage. At S402 the chain carries Phosphoserine. The helical; Signal-anchor for type II membrane protein transmembrane segment at 411-434 threads the bilayer; that stretch reads IPVWIKILLFVVVAVFLFLVYQAM. Residues 435–454 lie on the Lumenal side of the membrane; that stretch reads ETNQVNPFSNFLHVDPRKSN.

Belongs to the LEM family. As to quaternary structure, interacts with LMNB1, LMNB2, BANF1, AKAP8L, GMCL and chromosomes. Isoform Zeta interacts with BANF1/BAF and may sequester it in the cytoplasm. Post-translationally, mitosis-specific phosphorylation specifically abolishes its binding to lamin B and chromosomes. In terms of processing, citrullinated by PADI4. Expressed in many tissues. Most abundant in adult thymus and fetal liver.

The protein resides in the nucleus inner membrane. It localises to the cytoplasm. Functionally, may help direct the assembly of the nuclear lamina and thereby help maintain the structural organization of the nuclear envelope. Possible receptor for attachment of lamin filaments to the inner nuclear membrane. May be involved in the control of initiation of DNA replication through its interaction with NAKAP95. Thymopoietin (TP) and Thymopentin (TP5) may play a role in T-cell development and function. TP5 is an immunomodulating pentapeptide. The sequence is that of Lamina-associated polypeptide 2, isoforms beta/gamma (TMPO) from Homo sapiens (Human).